The primary structure comprises 204 residues: Leucyl/phenylalanyl-tRNA--protein transferase (204 aa).

It belongs to the L/F-transferase family.

It is found in the cytoplasm. It catalyses the reaction N-terminal L-lysyl-[protein] + L-leucyl-tRNA(Leu) = N-terminal L-leucyl-L-lysyl-[protein] + tRNA(Leu) + H(+). It carries out the reaction N-terminal L-arginyl-[protein] + L-leucyl-tRNA(Leu) = N-terminal L-leucyl-L-arginyl-[protein] + tRNA(Leu) + H(+). The enzyme catalyses L-phenylalanyl-tRNA(Phe) + an N-terminal L-alpha-aminoacyl-[protein] = an N-terminal L-phenylalanyl-L-alpha-aminoacyl-[protein] + tRNA(Phe). Functions in the N-end rule pathway of protein degradation where it conjugates Leu, Phe and, less efficiently, Met from aminoacyl-tRNAs to the N-termini of proteins containing an N-terminal arginine or lysine. The protein is Leucyl/phenylalanyl-tRNA--protein transferase of Rhizobium johnstonii (strain DSM 114642 / LMG 32736 / 3841) (Rhizobium leguminosarum bv. viciae).